Consider the following 373-residue polypeptide: Probable G-protein coupled receptor 45 (373 aa).

Topologically, residues 1–38 (MACNSTPMGTYEHLLLNVSNTLDPGDTPLSAPLRISLA) are extracellular. An N-linked (GlcNAc...) asparagine glycan is attached at N17. A helical membrane pass occupies residues 39 to 59 (IMMLLMIVVGFLGNTVVCIIV). Residues 60–75 (YQRPAMRSAINLLLAT) lie on the Cytoplasmic side of the membrane. A helical transmembrane segment spans residues 76-96 (LAFSDIMLSLCCMPFTAITLI). The Extracellular segment spans residues 97–109 (TVRWHFGDHFCRL). The helical transmembrane segment at 110–130 (SATLYWFFVLEGVAILLIISV) threads the bilayer. The Cytoplasmic segment spans residues 131 to 149 (DRFLIIVQRQDKLNPRRAK). Residues 150–170 (MIIAASWVLSFCISAPSFTGW) form a helical membrane-spanning segment. Residues 171–198 (TFMEVPARAPQCVLGYTEFPAERAYVVT) lie on the Extracellular side of the membrane. A helical transmembrane segment spans residues 199–219 (LVVAVFFAPFGVMLCSYLCIL). The Cytoplasmic segment spans residues 220–269 (NTVRKNAVRVHNQSDSLDLRQLTGAGLRRLRRQQQQASLDLSFKTKAFTT). The helical transmembrane segment at 270–290 (ILILFVGFSLCWLPHSVYSLL) threads the bilayer. Residues 291-306 (SAFSRRFYYSASFYTT) lie on the Extracellular side of the membrane. Residues 307 to 327 (STCVLWLSYLKSVFNPIVYCW) form a helical membrane-spanning segment. Residues 328–373 (RIKKFREACIELLPHTFQILPKVPERIQRKIQPSTIYVCNENQSAV) are Cytoplasmic-facing.

The protein belongs to the G-protein coupled receptor 1 family. As to expression, brain specific.

Its subcellular location is the cell membrane. Orphan receptor. May play a role in brain function. The polypeptide is Probable G-protein coupled receptor 45 (Gpr45) (Mus musculus (Mouse)).